The following is a 518-amino-acid chain: U3 small nucleolar RNA-associated protein 15 homolog (518 aa).

Ala2 carries the N-acetylalanine modification. WD repeat units follow at residues Lys36–Thr75, Arg78–Gln117, Gly120–Thr159, Glu162–Ser202, Glu204–Val242, Asn246–Ser285, and Asp287–Ser326. A Glycyl lysine isopeptide (Lys-Gly) (interchain with G-Cter in SUMO2) cross-link involves residue Lys249.

As to quaternary structure, part of the small subunit (SSU) processome, composed of more than 70 proteins and the RNA chaperone small nucleolar RNA (snoRNA) U3. May be a component of the proposed t-UTP subcomplex of the ribosomal small subunit (SSU) processome containing at least UTP4, WDR43, HEATR1, UTP15, WDR75. Interacts directly with UTP4 and WDR43.

It localises to the nucleus. The protein resides in the nucleolus. Ribosome biogenesis factor. Involved in nucleolar processing of pre-18S ribosomal RNA. Required for optimal pre-ribosomal RNA transcription by RNA polymerase I. Part of the small subunit (SSU) processome, first precursor of the small eukaryotic ribosomal subunit. During the assembly of the SSU processome in the nucleolus, many ribosome biogenesis factors, an RNA chaperone and ribosomal proteins associate with the nascent pre-rRNA and work in concert to generate RNA folding, modifications, rearrangements and cleavage as well as targeted degradation of pre-ribosomal RNA by the RNA exosome. This Homo sapiens (Human) protein is U3 small nucleolar RNA-associated protein 15 homolog.